The chain runs to 231 residues: Small ribosomal subunit protein uS5 (231 aa).

Positions 61–124 constitute an S5 DRBM domain; the sequence is KFRSKKPYRM…NRAKLNIIKV (64 aa).

It belongs to the universal ribosomal protein uS5 family. In terms of assembly, part of the 30S ribosomal subunit. Contacts protein S4.

With S4 and S12 plays an important role in translational accuracy. The sequence is that of Small ribosomal subunit protein uS5 from Nanoarchaeum equitans (strain Kin4-M).